Consider the following 453-residue polypeptide: Midnolin-A (453 aa).

The 75-residue stretch at 20–94 (MNLNIQSTTG…LTLLPSVEAG (75 aa)) folds into the Ubiquitin-like domain. 4 disordered regions span residues 184 to 219 (SHLA…TTSV), 232 to 256 (CAEQ…RSRK), 333 to 376 (RNAK…ENRA), and 390 to 429 (QKRL…EGSL). The span at 206-219 (HCNGPHSSPLTTSV) shows a compositional bias: polar residues. 2 stretches are compositionally biased toward low complexity: residues 239–252 (STRG…SPSS) and 338–351 (TSPQ…TTHP). The segment covering 365–376 (SGDRLRQTENRA) has biased composition (basic and acidic residues). Basic residues predominate over residues 390-399 (QKRLRRKARR). Over residues 415–428 (RTSSNSSTSSGEGS) the composition is skewed to low complexity.

The protein localises to the nucleus. It localises to the cytoplasm. It is found in the cytosol. Its subcellular location is the nucleolus. Its function is as follows. Facilitates ubiquitin-independent proteasomal degradation of polycomb protein CBX4. Plays a role in inhibiting the activity of glucokinase GCK and both glucose-induced and basal insulin secretion. In Xenopus laevis (African clawed frog), this protein is Midnolin-A (midn-a).